Reading from the N-terminus, the 263-residue chain is Endonuclease 8 (263 aa).

The active-site Schiff-base intermediate with DNA is the P2. The active-site Proton donor is the E3. K53 functions as the Proton donor; for beta-elimination activity in the catalytic mechanism. Q70, R125, and N169 together coordinate DNA. The FPG-type zinc finger occupies 229 to 263; it reads KVFHRDGEACERCGGIIEKTTLSSRPFYWCAHCQK. Residue R253 is the Proton donor; for delta-elimination activity of the active site.

This sequence belongs to the FPG family. The cofactor is Zn(2+).

It carries out the reaction 2'-deoxyribonucleotide-(2'-deoxyribose 5'-phosphate)-2'-deoxyribonucleotide-DNA = a 3'-end 2'-deoxyribonucleotide-(2,3-dehydro-2,3-deoxyribose 5'-phosphate)-DNA + a 5'-end 5'-phospho-2'-deoxyribonucleoside-DNA + H(+). In terms of biological role, involved in base excision repair of DNA damaged by oxidation or by mutagenic agents. Acts as a DNA glycosylase that recognizes and removes damaged bases. Has a preference for oxidized pyrimidines, such as thymine glycol, 5,6-dihydrouracil and 5,6-dihydrothymine. Has AP (apurinic/apyrimidinic) lyase activity and introduces nicks in the DNA strand. Cleaves the DNA backbone by beta-delta elimination to generate a single-strand break at the site of the removed base with both 3'- and 5'-phosphates. This Salmonella typhi protein is Endonuclease 8.